Consider the following 223-residue polypeptide: Serum amyloid P-component (223 aa).

Residues 1 to 19 (MNKPLLWISVLTSLLEAFA) form the signal peptide. The Pentraxin (PTX) domain occupies 24–223 (SGKVFVFPRE…YVIIKPLVWV (200 aa)). Asn51 carries an N-linked (GlcNAc...) asparagine glycan. The cysteines at positions 55 and 114 are disulfide-linked. The Ca(2+) site is built by Asp77, Asn78, Glu155, Gln156, Asp157, and Gln167.

The protein belongs to the pentraxin family. In terms of assembly, homopentamer. Pentraxin (or pentaxin) have a discoid arrangement of 5 non-covalently bound subunits. Ca(2+) serves as cofactor. Post-translationally, N-glycosylated with a complex biantennary oligosaccharide chain with a sialic acid at the end (disialo-SAP). Monosialo-SAP as well as asioalo-SAP are also detected. In terms of tissue distribution, found in serum and urine.

Its subcellular location is the secreted. Its function is as follows. Can interact with DNA and histones and may scavenge nuclear material released from damaged circulating cells. May also function as a calcium-dependent lectin. In Homo sapiens (Human), this protein is Serum amyloid P-component (APCS).